Reading from the N-terminus, the 736-residue chain is uncharacterized protein (736 aa).

2 consecutive ABC transporter domains span residues 183–459 (IKID…KQME) and 518–734 (LQMS…TMTI). ATP contacts are provided by residues 215–222 (GRNGIGKS) and 551–558 (GPNGAGKS).

The protein belongs to the ABC transporter superfamily.

It is found in the cytoplasm. This is an uncharacterized protein from Schizosaccharomyces pombe (strain 972 / ATCC 24843) (Fission yeast).